We begin with the raw amino-acid sequence, 545 residues long: Mitogen-activated protein kinase kinase kinase mom-4 (545 aa).

Positions 1-21 (MDTSPHSKPSSSSASQSSHSP) are enriched in low complexity. The interval 1–35 (MDTSPHSKPSSSSASQSSHSPSPAPVTAPRKTRDS) is disordered. Residues 53–308 (NLNSHQLGRG…AECLQYFTAL (256 aa)) enclose the Protein kinase domain. Residues 59–67 (LGRGTYGIV) and Lys86 each bind ATP. The active-site Proton acceptor is the Asp178. Positions 316 to 444 (NVPLADANTN…PIDDRRDSNE (129 aa)) are disordered. Polar residues-rich tracts occupy residues 352–369 (NGRT…QAVN) and 396–411 (ASSS…QSEA).

Belongs to the protein kinase superfamily. STE Ser/Thr protein kinase family. MAP kinase kinase kinase subfamily. As to quaternary structure, interacts with, and is activated by, tap-1. Mg(2+) serves as cofactor.

The catalysed reaction is L-seryl-[protein] + ATP = O-phospho-L-seryl-[protein] + ADP + H(+). The enzyme catalyses L-threonyl-[protein] + ATP = O-phospho-L-threonyl-[protein] + ADP + H(+). Functionally, part of the Wnt signaling pathway essential for the specification of the mesodermal cell fate in early embryos. Stimulates the wrm-1/lit-1-dependent phosphorylation of pop-1 and plays a role in the initial nuclear accumulation of wrm-1. In Caenorhabditis briggsae, this protein is Mitogen-activated protein kinase kinase kinase mom-4.